We begin with the raw amino-acid sequence, 530 residues long: Phosphoenolpyruvate carboxykinase (ATP) (530 aa).

Substrate contacts are provided by arginine 60, tyrosine 195, and lysine 201. Residues lysine 201, histidine 221, and 237–245 (GLSGTGKTT) contribute to the ATP site. Mn(2+) contacts are provided by lysine 201 and histidine 221. A Mn(2+)-binding site is contributed by aspartate 258. ATP contacts are provided by residues glutamate 286, arginine 324, 443–444 (RI), and serine 449. Arginine 324 is a substrate binding site.

It belongs to the phosphoenolpyruvate carboxykinase (ATP) family. Mn(2+) is required as a cofactor.

It localises to the cytoplasm. The catalysed reaction is oxaloacetate + ATP = phosphoenolpyruvate + ADP + CO2. It participates in carbohydrate biosynthesis; gluconeogenesis. In terms of biological role, involved in the gluconeogenesis. Catalyzes the conversion of oxaloacetate (OAA) to phosphoenolpyruvate (PEP) through direct phosphoryl transfer between the nucleoside triphosphate and OAA. This is Phosphoenolpyruvate carboxykinase (ATP) from Pelobacter propionicus (strain DSM 2379 / NBRC 103807 / OttBd1).